Consider the following 226-residue polypeptide: MASGGGYGDANAKIDYVFKVVLIGDSAVGKSQILARFARNEFSLDSKSTIGVEFQTRTLVIDHKTVKAQIWDTAGQERYRAVTSAYYRGAVGAMLVYDITKRQTFDHIPRWLEELRNHADKNIVIILIGNKCDLVNQRDVPTEDAKEFAEKEGLFFLETSALEATNVESAFTTVLTEIYNIVNKKSLAADESQGNGNSASLSGQKIIIPGPAQEIPAKRNMCCQAS.

GTP is bound by residues 24-32, 43-49, 72-76, 130-133, and 160-162; these read GDSAVGKSQ, SLDSKST, DTAGQ, NKCD, and SAL. The Effector region signature appears at 46–54; sequence SKSTIGVEF. Residues Cys-222 and Cys-223 are each lipidated (S-geranylgeranyl cysteine). Residue Cys-223 is modified to Cysteine methyl ester. A propeptide spans 224–226 (removed in mature form); sequence QAS.

The protein belongs to the small GTPase superfamily. Rab family.

Its subcellular location is the cell membrane. The protein is Ras-related protein Rab11A (RAB11A) of Lotus japonicus (Lotus corniculatus var. japonicus).